Here is a 520-residue protein sequence, read N- to C-terminus: Transactivator/viroplasmin protein (520 aa).

2 disordered regions span residues 32–51 and 487–520; these read GSSQ…KEEA and QDAS…KQVD. Residues 40–51 are compositionally biased toward basic and acidic residues; that stretch reads SLHRETPEKEEA.

This sequence belongs to the caulimoviridae viroplasmin family.

It is found in the host cytoplasm. Functionally, enhances the ribosomal termination-reinitiation event leading to the translation of major open reading frames on the polycistronic viral RNAs. This Arabidopsis thaliana (Mouse-ear cress) protein is Transactivator/viroplasmin protein.